A 306-amino-acid polypeptide reads, in one-letter code: Embryogenic cell protein 40 (306 aa).

Disordered regions lie at residues Met-1–Gly-57, Ala-80–Gly-171, and Gly-188–His-306. The segment covering Ile-12–Gln-23 has biased composition (polar residues). A compositionally biased stretch (low complexity) spans Val-32–Thr-44. 3 stretches are compositionally biased toward gly residues: residues Gly-85–Thr-119, Gly-127–Val-151, and Gly-159–Gly-171. The segment covering Gly-194–Ser-204 has biased composition (low complexity). Composition is skewed to basic and acidic residues over residues His-205–His-218 and Lys-243–Thr-259. Positions Thr-260–Ala-278 are enriched in low complexity. Basic and acidic residues predominate over residues Val-279–Pro-298.

It belongs to the plant dehydrin family.

The sequence is that of Embryogenic cell protein 40 (ECP40) from Daucus carota (Wild carrot).